We begin with the raw amino-acid sequence, 305 residues long: tRNA dimethylallyltransferase (305 aa).

Gly-8–Ser-15 contacts ATP. Thr-10–Ser-15 is a binding site for substrate. An interaction with substrate tRNA region spans residues Asp-33–Ala-36.

This sequence belongs to the IPP transferase family. As to quaternary structure, monomer. Mg(2+) is required as a cofactor.

It carries out the reaction adenosine(37) in tRNA + dimethylallyl diphosphate = N(6)-dimethylallyladenosine(37) in tRNA + diphosphate. In terms of biological role, catalyzes the transfer of a dimethylallyl group onto the adenine at position 37 in tRNAs that read codons beginning with uridine, leading to the formation of N6-(dimethylallyl)adenosine (i(6)A). This Aquifex aeolicus (strain VF5) protein is tRNA dimethylallyltransferase.